Here is a 222-residue protein sequence, read N- to C-terminus: Probable transaldolase (222 aa).

Lys91 acts as the Schiff-base intermediate with substrate in catalysis.

This sequence belongs to the transaldolase family. Type 3B subfamily.

It is found in the cytoplasm. The catalysed reaction is D-sedoheptulose 7-phosphate + D-glyceraldehyde 3-phosphate = D-erythrose 4-phosphate + beta-D-fructose 6-phosphate. It participates in carbohydrate degradation; pentose phosphate pathway; D-glyceraldehyde 3-phosphate and beta-D-fructose 6-phosphate from D-ribose 5-phosphate and D-xylulose 5-phosphate (non-oxidative stage): step 2/3. Transaldolase is important for the balance of metabolites in the pentose-phosphate pathway. The chain is Probable transaldolase from Chlorobaculum parvum (strain DSM 263 / NCIMB 8327) (Chlorobium vibrioforme subsp. thiosulfatophilum).